A 351-amino-acid chain; its full sequence is Minor outer capsid protein P9 (351 aa).

The interval 245 to 310 (GGVPAALPQP…VPSGNVSARG (66 aa)) is disordered. Basic and acidic residues predominate over residues 285–297 (MIRKKVETSKDGP).

The protein belongs to the phytoreovirus minor outer capsid protein P9 family.

The protein resides in the virion. It is found in the host cytoplasm. Functionally, minor outer capsid protein. The sequence is that of Minor outer capsid protein P9 from Rice dwarf virus (isolate Akita) (RDV).